Here is a 215-residue protein sequence, read N- to C-terminus: Ribonuclease T (215 aa).

The 175-residue stretch at 20–194 folds into the Exonuclease domain; it reads VVIDVETAGF…YDTMQTAKLF (175 aa). Residues Asp23, Glu25, His181, and Asp186 each contribute to the Mg(2+) site. Residue His181 is the Proton donor/acceptor of the active site.

It belongs to the RNase T family. Homodimer. Mg(2+) is required as a cofactor.

In terms of biological role, trims short 3' overhangs of a variety of RNA species, leaving a one or two nucleotide 3' overhang. Responsible for the end-turnover of tRNA: specifically removes the terminal AMP residue from uncharged tRNA (tRNA-C-C-A). Also appears to be involved in tRNA biosynthesis. In Yersinia enterocolitica serotype O:8 / biotype 1B (strain NCTC 13174 / 8081), this protein is Ribonuclease T.